A 364-amino-acid polypeptide reads, in one-letter code: tRNA 2-selenouridine synthase (364 aa).

Residues 14–137 form the Rhodanese domain; the sequence is LIADTPIIDV…LRQTAIQATI (124 aa). Cys97 functions as the S-selanylcysteine intermediate in the catalytic mechanism.

This sequence belongs to the SelU family. As to quaternary structure, monomer.

It catalyses the reaction 5-methylaminomethyl-2-thiouridine(34) in tRNA + selenophosphate + (2E)-geranyl diphosphate + H2O + H(+) = 5-methylaminomethyl-2-selenouridine(34) in tRNA + (2E)-thiogeraniol + phosphate + diphosphate. It carries out the reaction 5-methylaminomethyl-2-thiouridine(34) in tRNA + (2E)-geranyl diphosphate = 5-methylaminomethyl-S-(2E)-geranyl-thiouridine(34) in tRNA + diphosphate. The enzyme catalyses 5-methylaminomethyl-S-(2E)-geranyl-thiouridine(34) in tRNA + selenophosphate + H(+) = 5-methylaminomethyl-2-(Se-phospho)selenouridine(34) in tRNA + (2E)-thiogeraniol. The catalysed reaction is 5-methylaminomethyl-2-(Se-phospho)selenouridine(34) in tRNA + H2O = 5-methylaminomethyl-2-selenouridine(34) in tRNA + phosphate. Functionally, involved in the post-transcriptional modification of the uridine at the wobble position (U34) of tRNA(Lys), tRNA(Glu) and tRNA(Gln). Catalyzes the conversion of 2-thiouridine (S2U-RNA) to 2-selenouridine (Se2U-RNA). Acts in a two-step process involving geranylation of 2-thiouridine (S2U) to S-geranyl-2-thiouridine (geS2U) and subsequent selenation of the latter derivative to 2-selenouridine (Se2U) in the tRNA chain. This chain is tRNA 2-selenouridine synthase, found in Escherichia coli (strain ATCC 8739 / DSM 1576 / NBRC 3972 / NCIMB 8545 / WDCM 00012 / Crooks).